The primary structure comprises 145 residues: Pseudoazurin (145 aa).

The first 22 residues, M1–A22, serve as a signal peptide directing secretion. One can recognise a Plastocyanin-like domain in the interval V27–G115. The Cu cation site is built by H62, C100, H103, and M108. Positions T126–N145 are disordered.

As to quaternary structure, homodimer. Cu cation is required as a cofactor.

The protein localises to the periplasm. Functionally, this soluble electron transfer copper protein is required for the inactivation of copper-containing nitrite reductase in the presence of oxygen. The polypeptide is Pseudoazurin (pazS) (Paracoccus pantotrophus (Thiosphaera pantotropha)).